A 395-amino-acid chain; its full sequence is Envelope glycoprotein D (395 aa).

The signal sequence occupies residues 1-17 (MGSGIAAVLLSLAVALA). The Virion surface segment spans residues 18-342 (RVPAGEGEYV…PAPAPSGHTG (325 aa)). Position 63 (His63) interacts with Zn(2+). Disulfide bonds link Cys90/Cys214, Cys131/Cys227, and Cys143/Cys152. N-linked (GlcNAc...) asparagine; by host glycosylation is present at Asn119. Asp240 is a Zn(2+) binding site. Positions 261–306 (LQAAGWHGPKAPFTSTLLPPEVVETANVTRPELAPEERGTSRTPGD) are profusion. N-linked (GlcNAc...) asparagine; by host glycosylation occurs at Asn287. The disordered stretch occupies residues 289–314 (TRPELAPEERGTSRTPGDEPAPAVAA). Residues 343–362 (AVVGALAGAGLAAGVVVLAV) traverse the membrane as a helical segment. Residues 363-395 (YLVRRRGRAAGKHVRLPELLEEAHGPARRGAPY) lie on the Intravirion side of the membrane.

The protein belongs to the herpesviridae glycoprotein D family.

The protein localises to the virion membrane. In terms of biological role, envelope glycoprotein that binds to host cell entry receptors, promoting the virus entry into host cells. May trigger fusion with host membrane, by recruiting the fusion machinery composed of gB and gH/gL. The protein is Envelope glycoprotein D (gD) of Cercopithecine herpesvirus 1 (CeHV-1).